Here is a 174-residue protein sequence, read N- to C-terminus: CD164 sialomucin-like 2 protein (174 aa).

The signal sequence occupies residues 1-29; the sequence is MEAPGPRALRTALCGGCCCLLLCAQLAVA. The Extracellular portion of the chain corresponds to 30-141; that stretch reads GKGARGFGRG…AHSPGFDGAS (112 aa). N-linked (GlcNAc...) asparagine glycosylation is found at asparagine 71 and asparagine 103. Residues 142-162 form a helical membrane-spanning segment; the sequence is FIGGVVLVLSLQAVAFFVLHF. Residues 163–174 are Cytoplasmic-facing; sequence LKAKDSTYQTLI.

It belongs to the CD164 family.

It is found in the membrane. This chain is CD164 sialomucin-like 2 protein (CD164L2), found in Homo sapiens (Human).